Reading from the N-terminus, the 501-residue chain is Probable histidine--tRNA ligase, mitochondrial (501 aa).

Positions 32–54 are disordered; sequence TNSNNNNNNNNNNNNNNNNNKNI. Low complexity predominate over residues 33-54; the sequence is NSNNNNNNNNNNNNNNNNNKNI.

Belongs to the class-II aminoacyl-tRNA synthetase family.

It localises to the mitochondrion matrix. It catalyses the reaction tRNA(His) + L-histidine + ATP = L-histidyl-tRNA(His) + AMP + diphosphate + H(+). The chain is Probable histidine--tRNA ligase, mitochondrial (mhisS) from Dictyostelium discoideum (Social amoeba).